We begin with the raw amino-acid sequence, 4981 residues long: Protocadherin Fat 4 (4981 aa).

The first 38 residues, 1-38, serve as a signal peptide directing secretion; the sequence is MDLAPDRATGRPWLPLHTLSVSQLLRVFWLLSLLPGQA. Over 39 to 4504 the chain is Extracellular; sequence WVHGAEPRQV…PEEISLPLWA (4466 aa). 34 Cadherin domains span residues 43–135, 136–250, 251–353, 359–475, 476–582, 584–689, 690–793, 794–893, 894–996, 997–1100, 1101–1210, 1211–1315, 1316–1420, 1421–1529, 1529–1629, 1630–1740, 1741–1841, 1842–1944, 1945–2051, 2051–2154, 2155–2259, 2260–2364, 2365–2466, 2467–2567, 2568–2669, 2670–2773, 2773–2872, 2873–2983, 2984–3089, 3090–3194, 3195–3298, 3299–3404, 3405–3510, and 3509–3620; these read AEPR…APVF, PDPS…PPVF, GSSH…DPVV, PATS…PPVF, SQQV…KPVF, QPEG…SPVF, YPVQ…PPVF, SQVA…SPHF, LQAI…SPVF, DQLS…RPLF, NSTN…APKF, LKDF…TPSF, PKST…PPSF, PPGD…VPMF, FISQ…GPVF, TQPK…PPVF, PTDM…TPKF, SRPV…PPIF, SLNS…PPTF, FLSP…NPIF, AQAL…VPVF, ELSP…VPTF, ASKA…PPRF, QHHP…FPKV, RAKE…APIF, KEDP…APRF, FSQI…APRF, SRTS…APQF, LKSK…TPEF, SQSH…SPVF, LSDD…VPRF, VSKL…PPIF, TLNI…GPML, and MLTV…VEIF. Asn-84 and Asn-237 each carry an N-linked (GlcNAc...) asparagine glycan. N-linked (GlcNAc...) asparagine glycans are attached at residues Asn-393, Asn-416, Asn-435, Asn-483, Asn-551, Asn-615, Asn-676, Asn-721, Asn-825, Asn-880, Asn-946, Asn-1085, Asn-1101, Asn-1104, Asn-1225, Asn-1296, Asn-1389, and Asn-1514. Residues Asn-1828, Asn-1899, Asn-1967, and Asn-2119 are each glycosylated (N-linked (GlcNAc...) asparagine). N-linked (GlcNAc...) asparagine glycans are attached at residues Asn-2387 and Asn-2430. Asn-2921, Asn-2937, Asn-3036, Asn-3140, Asn-3217, Asn-3392, and Asn-3477 each carry an N-linked (GlcNAc...) asparagine glycan. 2 N-linked (GlcNAc...) asparagine glycosylation sites follow: Asn-3706 and Asn-3758. The region spanning 3802-3860 is the EGF-like 1 domain; that stretch reads DHDSCVHGPCQNGGSCLRRLAVSSVLKSRESLPVIIVANEPLQPFLCKCLPGYAGSWCE. 12 disulfides stabilise this stretch: Cys-3806–Cys-3817, Cys-3811–Cys-3848, Cys-3850–Cys-3859, Cys-3866–Cys-3877, Cys-3871–Cys-3886, Cys-3888–Cys-3897, Cys-3904–Cys-3915, Cys-3909–Cys-3924, Cys-3926–Cys-3935, Cys-3942–Cys-3953, Cys-3947–Cys-3962, and Cys-3964–Cys-3973. The region spanning 3862-3898 is the EGF-like 2; calcium-binding domain; sequence DIDECLPSPCHSGGTCHNLVGGFSCSCPDGFTGRACE. Residues 3900–3936 form the EGF-like 3; calcium-binding domain; that stretch reads DINECLQSPCKNGAICQNFPGSFNCVCKTGYTGKMCE. The EGF-like 4 domain occupies 3938-3974; it reads SVNYCECNPCFNGGSCQSGVDSYYCHCPFGVFGKHCE. A Laminin G-like 1 domain is found at 3975-4159; the sequence is LNSYGFEELS…LAAQGILDQC (185 aa). Residue Asn-4017 is glycosylated (N-linked (GlcNAc...) asparagine). 4 disulfides stabilise this stretch: Cys-4133/Cys-4159, Cys-4166/Cys-4177, Cys-4171/Cys-4186, and Cys-4188/Cys-4197. In terms of domain architecture, EGF-like 5 spans 4162–4198; the sequence is LEGACTRSPCQHGGTCMDYWSWQQCHCKEGLTGKYCE. One can recognise a Laminin G-like 2 domain in the interval 4217 to 4398; the sequence is YHMSQNEKRE…KTDPSVKIGC (182 aa). Residues Asn-4267 and Asn-4312 are each glycosylated (N-linked (GlcNAc...) asparagine). Cystine bridges form between Cys-4365/Cys-4398, Cys-4430/Cys-4441, Cys-4435/Cys-4451, and Cys-4453/Cys-4462. The 38-residue stretch at 4426–4463 folds into the EGF-like 6 domain; that stretch reads PPGDCASHPCQNGGSCEPGLHSGFTCSCPDSHTGRTCE. Residues 4505–4525 form a helical membrane-spanning segment; that stretch reads VPAIVGSCATVLALLVLSLIL. Residues 4526–4981 lie on the Cytoplasmic side of the membrane; that stretch reads CNQCRGKKAK…PKDGEAEQYV (456 aa). 5 disordered regions span residues 4534 to 4584, 4680 to 4713, 4752 to 4856, 4869 to 4911, and 4957 to 4981; these read AKNP…PDII, QGLR…STFY, RSKS…MEYD, KLSQ…AAPG, and AAAN…EQYV. Positions 4680 to 4699 are enriched in polar residues; the sequence is QGLRTSSLSHSACPTPNPLS. The segment at 4706–4795 is necessary and sufficient for interaction with MPDZ; it reads FSKSSTFYRN…GLSIEEVERL (90 aa). Over residues 4809-4821 the composition is skewed to basic and acidic residues; the sequence is DHGRSSSEEDCRR. Ser-4876 carries the post-translational modification Phosphoserine. Basic and acidic residues predominate over residues 4971–4981; sequence VPKDGEAEQYV.

In terms of assembly, heterophilic interaction with DCHS1; this interaction affects their respective protein levels. Interacts (via cytoplasmic domain) with MPDZ. Forms a complex with PALS1 and MPDZ. In terms of tissue distribution, widely expressed. Expressed in fetal brain, infant brain, brain tumor and colorectal cancer.

It localises to the membrane. In terms of biological role, cadherins are calcium-dependent cell adhesion proteins. FAT4 plays a role in the maintenance of planar cell polarity as well as in inhibition of YAP1-mediated neuroprogenitor cell proliferation and differentiation. The protein is Protocadherin Fat 4 (FAT4) of Homo sapiens (Human).